A 373-amino-acid polypeptide reads, in one-letter code: Inhibitor of nuclear factor kappa-B kinase-interacting protein (373 aa).

The span at 1 to 11 (MSEVKSRKKPG) shows a compositional bias: basic residues. A disordered region spans residues 1–38 (MSEVKSRKKPGPKVAAPEPEKRSDGRKNPEARGGAGWA). Residues 18–30 (EPEKRSDGRKNPE) are compositionally biased toward basic and acidic residues. A helical transmembrane segment spans residues 43–59 (GLSLLSLATSLGLAWLV). Coiled-coil stretches lie at residues 64–257 (EKFA…DKLS) and 290–325 (TERK…LEGI). An N-linked (GlcNAc...) asparagine glycan is attached at asparagine 151.

Post-translationally, N-glycosylated at Asn-151.

The protein resides in the endoplasmic reticulum membrane. In terms of biological role, target of p53/TP53 with pro-apoptotic function. This Rattus norvegicus (Rat) protein is Inhibitor of nuclear factor kappa-B kinase-interacting protein (Ikbip).